The sequence spans 368 residues: Glutamyl-tRNA reductase (368 aa).

Substrate contacts are provided by residues 43–46, S89, 94–96, and Q100; these read TCHR and EHQ. The Nucleophile role is filled by C44. 164-169 is a binding site for NADP(+); the sequence is GTGMMG.

The protein belongs to the glutamyl-tRNA reductase family. Homodimer.

The enzyme catalyses (S)-4-amino-5-oxopentanoate + tRNA(Glu) + NADP(+) = L-glutamyl-tRNA(Glu) + NADPH + H(+). It functions in the pathway porphyrin-containing compound metabolism; protoporphyrin-IX biosynthesis; 5-aminolevulinate from L-glutamyl-tRNA(Glu): step 1/2. Its function is as follows. Catalyzes the NADPH-dependent reduction of glutamyl-tRNA(Glu) to glutamate 1-semialdehyde (GSA). The polypeptide is Glutamyl-tRNA reductase (Thermosipho melanesiensis (strain DSM 12029 / CIP 104789 / BI429)).